The sequence spans 591 residues: Aspartate--tRNA(Asp/Asn) ligase (591 aa).

Glu-176 is an L-aspartate binding site. The aspartate stretch occupies residues 200–203 (QLFK). Residue Arg-222 participates in L-aspartate binding. ATP-binding positions include 222–224 (RDE) and Gln-231. An L-aspartate-binding site is contributed by His-450. ATP is bound at residue Glu-484. Arg-491 is a binding site for L-aspartate. Position 536 to 539 (536 to 539 (GLDR)) interacts with ATP.

It belongs to the class-II aminoacyl-tRNA synthetase family. Type 1 subfamily. Homodimer.

It localises to the cytoplasm. It carries out the reaction tRNA(Asx) + L-aspartate + ATP = L-aspartyl-tRNA(Asx) + AMP + diphosphate. Aspartyl-tRNA synthetase with relaxed tRNA specificity since it is able to aspartylate not only its cognate tRNA(Asp) but also tRNA(Asn). Reaction proceeds in two steps: L-aspartate is first activated by ATP to form Asp-AMP and then transferred to the acceptor end of tRNA(Asp/Asn). This is Aspartate--tRNA(Asp/Asn) ligase from Bacillus cereus (strain G9842).